Consider the following 122-residue polypeptide: Ribosomal protein eL22-like 1 (122 aa).

A phosphoserine mark is found at Ser112, Ser118, and Ser120.

Belongs to the eukaryotic ribosomal protein eL22 family.

This Mus musculus (Mouse) protein is Ribosomal protein eL22-like 1 (Rpl22l1).